Here is a 90-residue protein sequence, read N- to C-terminus: uncharacterized protein (90 aa).

The interval 13-34 (APEGMGPHHAASSSHHSAQHHH) is disordered. Residues 52–72 (YKMWFLYALILALIFGVFMWW) traverse the membrane as a helical segment.

It is found in the host membrane. This is an uncharacterized protein from Invertebrate iridescent virus 3 (IIV-3).